The chain runs to 492 residues: MNKSSTKTLIALSMMAVSSGVSAHGYVSETNDGIAGSRAALCKFPTSDTQEKNRDCGAVQWEPQSVEGPEGFPEKGPADGQIAGAGLVQFSELNEQTADRWVKRPITAGAQTFEWTFTANHVTRTWKYYMTKQNWNPNAVLTRDSFDLTPFCELEYNMEKPPLYPNTFSHECIVPEREGYQVILAVWDVGDTAAAFYNVIDVKFDGNGGVVDPTWSQGGQINPTRDLNVGERVFTRVFDASGENVSLSTELVIENETQGQANNWTHALATKINKEQQNIGAGQLNDKGEFSPQYGPNPVYLKAGSGLKSVEIGYQLETVEPVYHLDIEGLASEYTIGDSATELDLSLYATGDMNVELTVYNHGKEALANTNVTLKDGDAKSVVMALSKSEKGHHMLVSRIKNMDGELIKQDMSDFHLVEEAVTPPPSGDFDFVFPEGVKDYKAGTKVLAEDSNVYQCKEFPYSGYCVQWTETATNFAPGVGSDWSMAWDKVN.

The first 23 residues, 1-23 (MNKSSTKTLIALSMMAVSSGVSA), serve as a signal peptide directing secretion. The region spanning 24–204 (HGYVSETNDG…AFYNVIDVKF (181 aa)) is the Chitin-binding type-4 domain. Residues 443 to 484 (AGTKVLAEDSNVYQCKEFPYSGYCVQWTETATNFAPGVGSDW) form the Chitin-binding type-3 domain.

Belongs to the GbpA family.

The protein localises to the secreted. Functionally, probably interacts with GlcNAc residues. May promote attachment to both epithelial cell surfaces and chitin. In Aliivibrio fischeri (strain MJ11) (Vibrio fischeri), this protein is GlcNAc-binding protein A.